A 36-amino-acid polypeptide reads, in one-letter code: Ostricacin-1 (36 aa).

3 cysteine pairs are disulfide-bonded: cysteine 3/cysteine 29, cysteine 8/cysteine 23, and cysteine 13/cysteine 30.

The protein resides in the secreted. Has antibacterial activity against the Gram-positive bacteria S.aureus 1056 MRSA (MIC=1.25 ug/ml) and S.aureus NCTC 4163 (MIC=6.7 ug/ml), and the Gram-negative bacteria E.coli O157:H7 (MIC=0.96 ug/ml) and E.coli 0111 (MIC=6.7 ug/ml). Does not have antifungal activity against the yeast C.albicans 3153A. This Struthio camelus (Common ostrich) protein is Ostricacin-1.